The primary structure comprises 294 residues: Melanocortin receptor 5 (294 aa).

Over 1–29 the chain is Extracellular; sequence FLDLQLNATEGNVSGPSVGNTSSPCEDMG. Asparagine 7, asparagine 12, and asparagine 20 each carry an N-linked (GlcNAc...) asparagine glycan. Residues 30 to 53 traverse the membrane as a helical segment; it reads IEVEVFLTLGLISLLENILVIGAI. Residues 54–65 are Cytoplasmic-facing; the sequence is ARNKNLHVPMYF. Residues 66–89 traverse the membrane as a helical segment; it reads FVCSLAVADMLVSLSNSWETITIY. Topologically, residues 90–106 are extracellular; the sequence is LIANKHLVLSDTSVRHL. A helical membrane pass occupies residues 107-130; that stretch reads DNVFDSMICISLVASMCSLLAVAV. The Cytoplasmic portion of the chain corresponds to 131–147; it reads DRYVTIFYALRYQHLMT. A helical membrane pass occupies residues 148–171; it reads GRRCGAIIAGIWALCTGCGPVFIV. Residues 172–178 are Extracellular-facing; sequence YYESTYV. The chain crosses the membrane as a helical span at residues 179-203; the sequence is VVCLVAMFLTMLLLMASLYAHMFLQ. Topologically, residues 204–231 are cytoplasmic; the sequence is ARAHVRRIAALPGYRSARQRTSMKGAVT. Residues 232–257 traverse the membrane as a helical segment; sequence LAMLLGVFIVCWAPFFLHLILMISCP. Over 258–265 the chain is Extracellular; it reads QNLYCSCF. The chain crosses the membrane as a helical span at residues 266 to 289; it reads MSHFNMYLILIMCNSVIDPLIYAF. The Cytoplasmic portion of the chain corresponds to 290-294; it reads RSQEK.

This sequence belongs to the G-protein coupled receptor 1 family.

The protein resides in the cell membrane. Functionally, receptor for MSH (alpha, beta and gamma) and ACTH. The activity of this receptor is mediated by G proteins which activate adenylate cyclase. This receptor is a possible mediator of the immunomodulation properties of melanocortins. The sequence is that of Melanocortin receptor 5 (MC5R) from Sus scrofa (Pig).